The chain runs to 376 residues: Pulmonary surfactant-associated protein B (376 aa).

The first 24 residues, 1-24 (MAKLHLQWLLLLPTLCSLGAATES), serve as a signal peptide directing secretion. A Saposin A-type domain is found at 25-63 (ASSPDCAQGPKFWCQSLEQAIQCRALGHCLQEVWGHAGA). Residues 25–190 (ASSPDCAQGP…PHTQDLSEQQ (166 aa)) constitute a propeptide that is removed on maturation. Saposin B-type domains follow at residues 63–145 (ANDL…PLGQ), 194–271 (PLPF…STAD), and 290–365 (QDTE…EAPA). Disulfide bonds link Cys-67–Cys-141, Cys-70–Cys-135, Cys-98–Cys-110, Cys-198–Cys-267, Cys-201–Cys-261, Cys-225–Cys-236, Cys-294–Cys-361, Cys-297–Cys-355, and Cys-320–Cys-330. A propeptide spanning residues 270–376 (ADAIGPALPA…PLQCFQTPHL (107 aa)) is cleaved from the precursor. An N-linked (GlcNAc...) asparagine glycan is attached at Asn-306.

As to quaternary structure, homodimer; disulfide-linked.

The protein localises to the secreted. It localises to the extracellular space. It is found in the surface film. In terms of biological role, pulmonary surfactant-associated proteins promote alveolar stability by lowering the surface tension at the air-liquid interface in the peripheral air spaces. SP-B increases the collapse pressure of palmitic acid to nearly 70 millinewtons per meter. The polypeptide is Pulmonary surfactant-associated protein B (Sftpb) (Rattus norvegicus (Rat)).